The following is a 349-amino-acid chain: MSEDYLDRDVSPALTVGEADIDVSLRPRSLREFIGQPRVREQLQLVIEGAKNRGATPDHILLSGPPGLGKTSLAMIIAAELGSSLRMTSGPALERAGDLAVMLSNLVEHDVLFIDEIHRIARPAEEMLYLAMEDFRVDVIVGKGPGATSIPLEVAPFTLVGATTRSGALTGPLRDRFGFTAHMDFYEPTELEGVLARAAGILGIELGVEAGAEIARRSRGTPRIANRLLRRVRDFAEVRADGVITRDVAKAALAVYDVDELGLDRLDRAVLSALTRSFGGGPVGVSTLAVAVGEEATTVEEVCEPFLVRAGMVARTPRGRVATAQAWTYLCMTPPVGVTGLSQPGLFES.

Residues 1-186 (MSEDYLDRDV…FGFTAHMDFY (186 aa)) form a large ATPase domain (RuvB-L) region. Residues Leu25, Arg26, Gly67, Lys70, Thr71, Ser72, 133–135 (EDF), Arg176, Tyr186, and Arg223 contribute to the ATP site. Thr71 provides a ligand contact to Mg(2+). The small ATPAse domain (RuvB-S) stretch occupies residues 187–257 (EPTELEGVLA…VAKAALAVYD (71 aa)). The interval 260–349 (ELGLDRLDRA…GLSQPGLFES (90 aa)) is head domain (RuvB-H). Positions 315 and 320 each coordinate DNA.

The protein belongs to the RuvB family. Homohexamer. Forms an RuvA(8)-RuvB(12)-Holliday junction (HJ) complex. HJ DNA is sandwiched between 2 RuvA tetramers; dsDNA enters through RuvA and exits via RuvB. An RuvB hexamer assembles on each DNA strand where it exits the tetramer. Each RuvB hexamer is contacted by two RuvA subunits (via domain III) on 2 adjacent RuvB subunits; this complex drives branch migration. In the full resolvosome a probable DNA-RuvA(4)-RuvB(12)-RuvC(2) complex forms which resolves the HJ.

The protein resides in the cytoplasm. The catalysed reaction is ATP + H2O = ADP + phosphate + H(+). Functionally, the RuvA-RuvB-RuvC complex processes Holliday junction (HJ) DNA during genetic recombination and DNA repair, while the RuvA-RuvB complex plays an important role in the rescue of blocked DNA replication forks via replication fork reversal (RFR). RuvA specifically binds to HJ cruciform DNA, conferring on it an open structure. The RuvB hexamer acts as an ATP-dependent pump, pulling dsDNA into and through the RuvAB complex. RuvB forms 2 homohexamers on either side of HJ DNA bound by 1 or 2 RuvA tetramers; 4 subunits per hexamer contact DNA at a time. Coordinated motions by a converter formed by DNA-disengaged RuvB subunits stimulates ATP hydrolysis and nucleotide exchange. Immobilization of the converter enables RuvB to convert the ATP-contained energy into a lever motion, pulling 2 nucleotides of DNA out of the RuvA tetramer per ATP hydrolyzed, thus driving DNA branch migration. The RuvB motors rotate together with the DNA substrate, which together with the progressing nucleotide cycle form the mechanistic basis for DNA recombination by continuous HJ branch migration. Branch migration allows RuvC to scan DNA until it finds its consensus sequence, where it cleaves and resolves cruciform DNA. The protein is Holliday junction branch migration complex subunit RuvB of Mycobacterium leprae (strain Br4923).